Here is a 265-residue protein sequence, read N- to C-terminus: Probable FAD synthase (265 aa).

Belongs to the PAPS reductase family. FAD1 subfamily.

The enzyme catalyses FMN + ATP + H(+) = FAD + diphosphate. The protein operates within cofactor biosynthesis; FAD biosynthesis; FAD from FMN: step 1/1. Functionally, adenylates FMN to FAD. In Schizosaccharomyces pombe (strain 972 / ATCC 24843) (Fission yeast), this protein is Probable FAD synthase.